A 699-amino-acid chain; its full sequence is Glutamine--fructose-6-phosphate aminotransferase [isomerizing] (699 aa).

Catalysis depends on Cys-2, which acts as the Nucleophile. Positions 2 to 303 (CGIFGYANFS…DNDIVHISNG (302 aa)) constitute a Glutamine amidotransferase type-2 domain. 2 consecutive SIS domains span residues 377–516 (HVSG…QNLV) and 544–689 (SVKS…ADFP).

The catalysed reaction is D-fructose 6-phosphate + L-glutamine = D-glucosamine 6-phosphate + L-glutamate. It functions in the pathway nucleotide-sugar biosynthesis; UDP-N-acetyl-alpha-D-glucosamine biosynthesis; alpha-D-glucosamine 6-phosphate from D-fructose 6-phosphate: step 1/1. In terms of biological role, involved in amino sugar synthesis (formation of chitin, supplies the amino sugars of asparagine-linked oligosaccharides of glycoproteins). The polypeptide is Glutamine--fructose-6-phosphate aminotransferase [isomerizing] (GFA1) (Encephalitozoon cuniculi (strain GB-M1) (Microsporidian parasite)).